The chain runs to 125 residues: Nascent polypeptide-associated complex protein (125 aa).

The 68-residue stretch at 9-76 folds into the NAC-A/B domain; it reads PRMMKQMQKM…SKNTSKTAEK (68 aa).

The protein belongs to the NAC-alpha family. In terms of assembly, homodimer. Interacts with the ribosome. Binds ribosomal RNA.

Contacts the emerging nascent chain on the ribosome. This is Nascent polypeptide-associated complex protein from Methanococcus vannielii (strain ATCC 35089 / DSM 1224 / JCM 13029 / OCM 148 / SB).